We begin with the raw amino-acid sequence, 191 residues long: Cathelicidin-related antimicrobial peptide Na_CRAMP (191 aa).

A signal peptide spans 1–22 (MEGFFWKTLLVVGALTISGTSS). The propeptide occupies 23-161 (FPHKPLTYEE…DQPKRVKRFK (139 aa)). Intrachain disulfides connect Cys81–Cys92 and Cys103–Cys120. A disordered region spans residues 126 to 154 (EEEQKQEEGNEEEKEVEKEEKEEDQKDQP). Basic and acidic residues predominate over residues 140–154 (EVEKEEKEEDQKDQP).

It belongs to the cathelicidin family. Expressed by the venom gland.

The protein resides in the secreted. It localises to the target cell membrane. In terms of biological role, potent antimicrobial peptide against most of Gram-negative bacteria, some Gram-positive bacteria (Bacillus) and some fungi. Adopts an amphipathic alpha helical conformation, that may allow to partition into the target membrane. No hemolytic and cytotoxic activities have been observed on mammalian cells. The protein is Cathelicidin-related antimicrobial peptide Na_CRAMP of Naja atra (Chinese cobra).